We begin with the raw amino-acid sequence, 892 residues long: Alanine--tRNA ligase (892 aa).

Positions 596, 600, 700, and 704 each coordinate Zn(2+).

This sequence belongs to the class-II aminoacyl-tRNA synthetase family. Requires Zn(2+) as cofactor.

The protein resides in the cytoplasm. It catalyses the reaction tRNA(Ala) + L-alanine + ATP = L-alanyl-tRNA(Ala) + AMP + diphosphate. Catalyzes the attachment of alanine to tRNA(Ala) in a two-step reaction: alanine is first activated by ATP to form Ala-AMP and then transferred to the acceptor end of tRNA(Ala). Also edits incorrectly charged Ser-tRNA(Ala) and Gly-tRNA(Ala) via its editing domain. The polypeptide is Alanine--tRNA ligase (Methanococcus maripaludis (strain C7 / ATCC BAA-1331)).